A 160-amino-acid polypeptide reads, in one-letter code: Large ribosomal subunit protein uL22c (160 aa).

This sequence belongs to the universal ribosomal protein uL22 family. Part of the 50S ribosomal subunit.

Its subcellular location is the plastid. The protein resides in the chloroplast. This protein binds specifically to 23S rRNA. Its function is as follows. The globular domain of the protein is located near the polypeptide exit tunnel on the outside of the subunit, while an extended beta-hairpin is found that lines the wall of the exit tunnel in the center of the 70S ribosome. The protein is Large ribosomal subunit protein uL22c (rpl22) of Lepidium virginicum (Virginia pepperweed).